Here is a 422-residue protein sequence, read N- to C-terminus: MNIEKVIAREVLDSRGNPTVEAEVFLDSGFSGRAIVPSGASTGTHEALELRDGDGRYGGKGVLRAVQNVNEVLAPALVGLDASEQGAVDAAMLALDGTPNKGRLGGNAILAVSLATARAAANELGVPLYRYLGGSNAKTLPVPMMNVINGGAHADNNVDFQEFMVMPVGAPTFREALRYGAETFHALKKVLAGRGYNTNVGDEGGFAPDLKSNEEALEVLLEAIEKAGYEPGKDIAIALDPATTELYRDGQYHLESEGRSLSTAEMVDFWADWVSRYPIVSIEDGLAEDDWDGWRLLTERLGDRVQLVGDDLFVTNPERLARGIETGVGNAILVKVNQIGTLTESMDAIELAKRSRYGTIISHRSGESEDAFIADLAVATNAGQIKTGSASRSDRIAKYNQLLRIEDGLGDRAVYLGRRALR.

Residue Q161 participates in (2R)-2-phosphoglycerate binding. The active-site Proton donor is E203. The Mg(2+) site is built by D240, E283, and D310. (2R)-2-phosphoglycerate is bound by residues K335, R364, S365, and K386. K335 serves as the catalytic Proton acceptor.

The protein belongs to the enolase family. Requires Mg(2+) as cofactor.

Its subcellular location is the cytoplasm. The protein resides in the secreted. The protein localises to the cell surface. The enzyme catalyses (2R)-2-phosphoglycerate = phosphoenolpyruvate + H2O. It participates in carbohydrate degradation; glycolysis; pyruvate from D-glyceraldehyde 3-phosphate: step 4/5. Catalyzes the reversible conversion of 2-phosphoglycerate (2-PG) into phosphoenolpyruvate (PEP). It is essential for the degradation of carbohydrates via glycolysis. The protein is Enolase of Deinococcus geothermalis (strain DSM 11300 / CIP 105573 / AG-3a).